The following is a 344-amino-acid chain: Phosphate acyltransferase (344 aa).

The protein belongs to the PlsX family. As to quaternary structure, homodimer. Probably interacts with PlsY.

The protein resides in the cytoplasm. It carries out the reaction a fatty acyl-[ACP] + phosphate = an acyl phosphate + holo-[ACP]. It participates in lipid metabolism; phospholipid metabolism. In terms of biological role, catalyzes the reversible formation of acyl-phosphate (acyl-PO(4)) from acyl-[acyl-carrier-protein] (acyl-ACP). This enzyme utilizes acyl-ACP as fatty acyl donor, but not acyl-CoA. This chain is Phosphate acyltransferase, found in Erwinia tasmaniensis (strain DSM 17950 / CFBP 7177 / CIP 109463 / NCPPB 4357 / Et1/99).